The primary structure comprises 291 residues: Glycine--tRNA ligase alpha subunit (291 aa).

The protein belongs to the class-II aminoacyl-tRNA synthetase family. As to quaternary structure, tetramer of two alpha and two beta subunits.

It localises to the cytoplasm. The catalysed reaction is tRNA(Gly) + glycine + ATP = glycyl-tRNA(Gly) + AMP + diphosphate. The chain is Glycine--tRNA ligase alpha subunit from Geobacter metallireducens (strain ATCC 53774 / DSM 7210 / GS-15).